An 80-amino-acid polypeptide reads, in one-letter code: U-actitoxin-Avd9a (80 aa).

Residues 1–20 (MNLKVLAVFVLCAILVVVTA) form the signal peptide. The propeptide occupies 21–39 (ERRGTETGVYKKDTLQDLI). A ShKT domain is found at 45–80 (CIDRFPTGTCKQVKKGGSCKNSDKYRMNCRKTCGLC). 3 cysteine pairs are disulfide-bonded: cysteine 45–cysteine 80, cysteine 54–cysteine 73, and cysteine 63–cysteine 77. The tract at residues 68–69 (KY) is crucial for binding to potassium channels.

Belongs to the sea anemone type 1 potassium channel toxin family. Type 1b subfamily.

The protein resides in the secreted. The protein localises to the nematocyst. In terms of biological role, inhibits voltage-gated potassium channels (Kv1/KCNA). In Anemonia viridis (Snakelocks anemone), this protein is U-actitoxin-Avd9a.